A 594-amino-acid polypeptide reads, in one-letter code: MAPAASACAGAPGSHPATTIFVCLFLIIYCPDRASAIQVTVPDPYHVVILFQPVTLHCTYQMSNTLTAPIVIWKYKSFCRDRVADAFSPASVDNQLNAQLAAGNPGYNPYVECQDSVRTVRVVATKQGNAVTLGDYYQGRRITITGNADLTFEQTAWGDSGVYYCSVVSAQDLDGNNEAYAELIVLGRTSEAPELLPGFRAGPLEDWLFVVVVCLASLLFFLLLGICWCQCCPHTCCCYVRCPCCPDKCCCPEALYAAGKAATSGVPSIYAPSIYTHLSPAKTPPPPPAMIPMRPPYGYPGDFDRTSSVGGHSSQVPLLREVDGSVSSEVRSGYRIQANQQDDSMRVLYYMEKELANFDPSRPGPPNGRVERAMSEVTSLHEDDWRSRPSRAPALTPIRDEEWNRHSPRSPRTWEQEPLQEQPRGGWGSGRPRARSVDALDDINRPGSTESGRSSPPSSGRRGRAYAPPRSRSRDDLYDPDDPRDLPHSRDPHYYDDLRSRDPRADPRSRQRSHDPRDAGFRSRDPQYDGRLLEEALKKKGAGERRRVYREEEEEEEEGHYPPAPPPYSETDSQASRERRMKKNLALSRESLVV.

An N-terminal signal peptide occupies residues 1–35 (MAPAASACAGAPGSHPATTIFVCLFLIIYCPDRAS). Residues 36-206 (AIQVTVPDPY…PGFRAGPLED (171 aa)) are Extracellular-facing. The 93-residue stretch at 89-181 (PASVDNQLNA…DLDGNNEAYA (93 aa)) folds into the Ig-like V-type domain. C113 and C165 are joined by a disulfide. Residues 207–227 (WLFVVVVCLASLLFFLLLGIC) traverse the membrane as a helical segment. Topologically, residues 228-594 (WCQCCPHTCC…LALSRESLVV (367 aa)) are cytoplasmic. The residue at position 283 (T283) is a Phosphothreonine. Residue S308 is modified to Phosphoserine; by MAPK8 and MAPK9. Phosphoserine occurs at positions 314, 332, 375, and 379. A compositionally biased stretch (basic and acidic residues) spans 375 to 387 (SEVTSLHEDDWRS). Residues 375–594 (SEVTSLHEDD…LALSRESLVV (220 aa)) form a disordered region. A Phosphothreonine modification is found at T396. 3 positions are modified to phosphoserine: S407, S410, and S436. Residues 435 to 444 (RSVDALDDIN) show a composition bias toward basic and acidic residues. The span at 445–460 (RPGSTESGRSSPPSSG) shows a compositional bias: low complexity. Residues S471 and S473 each carry the phosphoserine modification. Basic and acidic residues predominate over residues 472-550 (RSRDDLYDPD…GAGERRRVYR (79 aa)). Phosphotyrosine is present on Y478. Residue S576 is modified to Phosphoserine. K583 participates in a covalent cross-link: Glycyl lysine isopeptide (Lys-Gly) (interchain with G-Cter in ubiquitin). Phosphoserine is present on residues S588 and S591.

Belongs to the immunoglobulin superfamily. LISCH7 family. Homotrimer or homotetramer. Assembles into cell-cell contacts. Interacts (via the cytoplasmic domain) with MARVELD2 (via C-terminal cytoplasmic domain); the interaction is required to recruit MARVELD2 to tricellular contacts. Interacts with OCLN. In terms of processing, phosphorylation at Ser-308 by MAPK8/JNK1 and MAPK9/JNK2 may be required for exclusive localization at tricellular tight junstions. Polyubiquitinated at Lys-583 via 'Lys-63'-linked ubiquitin chains; deubiquitinated by USP53. As to expression, expressed in epithelial tissues (at protein level). Specifically expressed in liver and to a lower extent in kidney (at protein level). Also detected in brain, testis, ovaries, adrenal gland, intestine, muscle, and lung. In colon, only expressed in the lower portion of crypts. Expressed in the liver. In terms of tissue distribution, expressed in liver, stomach, small intestine and colon. Also detected in other epithelial tissues.

It is found in the cell membrane. It localises to the cell junction. Its subcellular location is the tight junction. In terms of biological role, probable role in the clearance of triglyceride-rich lipoprotein from blood. Binds chylomicrons, LDL and VLDL in presence of free fatty acids and allows their subsequent uptake in the cells. Maintains epithelial barrier function by recruiting MARVELD2/tricellulin to tricellular tight junctions. The chain is Lipolysis-stimulated lipoprotein receptor from Mus musculus (Mouse).